Consider the following 199-residue polypeptide: Oleosin 21.2 kDa (199 aa).

Positions 1 to 14 (MADTHRVDRTDRHF) are enriched in basic and acidic residues. The tract at residues 1 to 31 (MADTHRVDRTDRHFQFQSPYEGGRGQGQYEG) is disordered. An N-acetylalanine modification is found at alanine 2. A polar region spans residues 2–56 (ADTHRVDRTDRHFQFQSPYEGGRGQGQYEGDRGYGGGGYKSMMPESGPSSTQVLS). Positions 22–31 (GGRGQGQYEG) are enriched in gly residues. A run of 3 helical transmembrane segments spans residues 51 to 71 (STQV…LALA), 72 to 92 (GLLL…FLLF), and 96 to 116 (IVPA…SGMF). The tract at residues 57 to 128 (LLIGVPVVGS…TGLSSISWVM (72 aa)) is hydrophobic. The tract at residues 159 to 199 (KGKEMGQHVQNKAQDVKQYDISKPHDTTTKGHETQGRTTAA) is disordered. Positions 172–193 (QDVKQYDISKPHDTTTKGHETQ) are enriched in basic and acidic residues.

It belongs to the oleosin family.

The protein localises to the lipid droplet. It is found in the membrane. Functionally, may have a structural role to stabilize the lipid body during desiccation of the seed by preventing coalescence of the oil. Probably interacts with both lipid and phospholipid moieties of lipid bodies. May also provide recognition signals for specific lipase anchorage in lipolysis during seedling growth. This Arabidopsis thaliana (Mouse-ear cress) protein is Oleosin 21.2 kDa.